A 635-amino-acid chain; its full sequence is Protein OPG056 (635 aa).

Belongs to the orthopoxvirus OPG056 family. In terms of assembly, interacts with protein OPG164. Interacts with protein OPG064.

It localises to the virion membrane. The protein resides in the host endosome. Plays a role in intracellular enveloped virus (IEV) transport to the cell surface through microtubule transport. Together with protein OPG064, forms a complex that interacts with host KLC2 (kinesin light chain isoform 2) to engage the kinesin-1 complex and thereby promote IEV trafficking. This is Protein OPG056 (OPG056) from Homo sapiens (Human).